Consider the following 518-residue polypeptide: Beta-secretase 2 (518 aa).

Residues 1–20 form the signal peptide; the sequence is MGALARALLLPLLAQWLLRA. The propeptide occupies 21–62; sequence APELAPAPFTLPLRVAAATNRVVAPTPGPGTPAERHADGLAL. Over 21–473 the chain is Extracellular; the sequence is APELAPAPFT…SEPILWIVSY (453 aa). Positions 92-429 constitute a Peptidase A1 domain; sequence YYLEMLIGTP…DRAQKRVGFA (338 aa). The active site involves D110. N-linked (GlcNAc...) asparagine glycosylation occurs at N170. Intrachain disulfides connect C233–C433, C292–C457, and C344–C393. Residue D303 is part of the active site. N366 carries an N-linked (GlcNAc...) asparagine glycan. Residues 474 to 494 form a helical membrane-spanning segment; it reads ALMSVCGAILLVLIVLLLLPF. Topologically, residues 495–518 are cytoplasmic; that stretch reads RCQRRPRDPEVVNDESSLVRHRWK.

Belongs to the peptidase A1 family. Monomer. Interacts with RTN3 and RTN4. In terms of processing, undergoes autoproteolytic cleavage. Post-translationally, glycosylated. As to expression, brain. Present in neurons within the hippocampus, frontal cortex and temporal cortex (at protein level). Expressed at low levels in most peripheral tissues and at higher levels in colon, kidney, pancreas, placenta, prostate, stomach and trachea. Expressed at low levels in the brain. Found in spinal cord, medulla oblongata, substantia nigra and locus coruleus. Expressed in the ductal epithelium of both normal and malignant prostate.

It localises to the cell membrane. It is found in the golgi apparatus. The protein resides in the endoplasmic reticulum. Its subcellular location is the endosome. The protein localises to the melanosome. It carries out the reaction Broad endopeptidase specificity. Cleaves Glu-Val-Asn-Leu-|-Asp-Ala-Glu-Phe in the Swedish variant of Alzheimer's amyloid precursor protein.. Responsible for the proteolytic processing of the amyloid precursor protein (APP). Cleaves APP, between residues 690 and 691, leading to the generation and extracellular release of beta-cleaved soluble APP, and a corresponding cell-associated C-terminal fragment which is later released by gamma-secretase. It has also been shown that it can cleave APP between residues 671 and 672. Involved in the proteolytic shedding of PMEL at early stages of melanosome biogenesis. Cleaves PMEL within the M-beta fragment to release the amyloidogenic PMEL luminal fragment containing M-alpha and a small portion of M-beta N-terminus. This is a prerequisite step for subsequent processing and assembly of PMEL fibrils into amyloid sheets. Responsible also for the proteolytic processing of CLTRN in pancreatic beta cells. This Homo sapiens (Human) protein is Beta-secretase 2 (BACE2).